A 282-amino-acid chain; its full sequence is Small ribosomal subunit protein uS2 (282 aa).

The disordered stretch occupies residues 245-266; that stretch reads AEEAVEELPLPTGEAQDEASSK.

The protein belongs to the universal ribosomal protein uS2 family.

The polypeptide is Small ribosomal subunit protein uS2 (rpsB) (Chlamydia trachomatis serovar D (strain ATCC VR-885 / DSM 19411 / UW-3/Cx)).